The sequence spans 307 residues: tRNA pseudouridine synthase B (307 aa).

Asp-38 (nucleophile) is an active-site residue.

The protein belongs to the pseudouridine synthase TruB family. Type 1 subfamily.

The enzyme catalyses uridine(55) in tRNA = pseudouridine(55) in tRNA. Responsible for synthesis of pseudouridine from uracil-55 in the psi GC loop of transfer RNAs. The polypeptide is tRNA pseudouridine synthase B (Bacillus cereus (strain ATCC 10987 / NRS 248)).